Consider the following 359-residue polypeptide: Fructose-bisphosphate aldolase (359 aa).

D-glyceraldehyde 3-phosphate is bound at residue Ser62. Asp109 (proton donor) is an active-site residue. Zn(2+)-binding residues include His110, Asp144, Glu174, and His226. Gly227 lines the dihydroxyacetone phosphate pocket. His265 provides a ligand contact to Zn(2+). Residues 266 to 268 (GGS) and 287 to 290 (NLDT) contribute to the dihydroxyacetone phosphate site.

Belongs to the class II fructose-bisphosphate aldolase family. Homodimer. It depends on Zn(2+) as a cofactor.

The protein localises to the cytoplasm. The enzyme catalyses beta-D-fructose 1,6-bisphosphate = D-glyceraldehyde 3-phosphate + dihydroxyacetone phosphate. The protein operates within carbohydrate degradation; glycolysis; D-glyceraldehyde 3-phosphate and glycerone phosphate from D-glucose: step 4/4. In terms of biological role, catalyzes the aldol condensation of dihydroxyacetone phosphate (DHAP or glycerone-phosphate) with glyceraldehyde 3-phosphate (G3P) to form fructose 1,6-bisphosphate (FBP) in gluconeogenesis and the reverse reaction in glycolysis. The protein is Fructose-bisphosphate aldolase (FBA1) of Candida albicans (strain SC5314 / ATCC MYA-2876) (Yeast).